The sequence spans 417 residues: Gamma-glutamyl phosphate reductase (417 aa).

Belongs to the gamma-glutamyl phosphate reductase family.

It localises to the cytoplasm. The enzyme catalyses L-glutamate 5-semialdehyde + phosphate + NADP(+) = L-glutamyl 5-phosphate + NADPH + H(+). It participates in amino-acid biosynthesis; L-proline biosynthesis; L-glutamate 5-semialdehyde from L-glutamate: step 2/2. Catalyzes the NADPH-dependent reduction of L-glutamate 5-phosphate into L-glutamate 5-semialdehyde and phosphate. The product spontaneously undergoes cyclization to form 1-pyrroline-5-carboxylate. The sequence is that of Gamma-glutamyl phosphate reductase from Shigella flexneri serotype 5b (strain 8401).